Reading from the N-terminus, the 327-residue chain is Ribose operon repressor (327 aa).

Residues 1 to 56 (MTTIKQVALEAGVSKSTVSRFIAQNGYVSDEAREKIERAIKKLNFRPNLSAQSLKT) enclose the HTH lacI-type domain. Residues 4–23 (IKQVALEAGVSKSTVSRFIA) constitute a DNA-binding region (H-T-H motif).

In terms of biological role, transcriptional repressor for the ribose rbsDACBK operon. In Lactococcus lactis subsp. lactis (strain IL1403) (Streptococcus lactis), this protein is Ribose operon repressor (rbsR).